A 268-amino-acid chain; its full sequence is Undecaprenyl-diphosphatase (268 aa).

A run of 7 helical transmembrane segments spans residues 41–61, 89–109, 114–134, 155–175, 191–211, 218–238, and 248–268; these read PGPS…VCYF, IFIG…FVPY, IFRS…LMYI, LIGL…GVTI, FSFL…FISS, FSFF…LLAI, and NGLK…LLNL.

This sequence belongs to the UppP family.

It localises to the cell inner membrane. The catalysed reaction is di-trans,octa-cis-undecaprenyl diphosphate + H2O = di-trans,octa-cis-undecaprenyl phosphate + phosphate + H(+). In terms of biological role, catalyzes the dephosphorylation of undecaprenyl diphosphate (UPP). Confers resistance to bacitracin. This chain is Undecaprenyl-diphosphatase, found in Prochlorococcus marinus (strain MIT 9312).